We begin with the raw amino-acid sequence, 363 residues long: D-proline dehydrogenase (363 aa).

An FAD-binding site is contributed by 3 to 17; sequence VAIVGGGIIGLFTAY.

The protein belongs to the DadA oxidoreductase family. In terms of assembly, homotetramer. Requires FAD as cofactor.

Its subcellular location is the cell membrane. The catalysed reaction is D-proline + A = 1-pyrroline-2-carboxylate + AH2. Its function is as follows. Catalyzes the dehydrogenation of D-proline. Can also use other D-amino acids, but with lower efficiency. The chain is D-proline dehydrogenase (dpdh) from Pyrobaculum islandicum (strain DSM 4184 / JCM 9189 / GEO3).